The primary structure comprises 199 residues: NAD(P)H dehydrogenase (quinone) (199 aa).

In terms of domain architecture, Flavodoxin-like spans 4-190 (VLVLYYSAYG…DGARYQGRKI (187 aa)). FMN contacts are provided by residues 10–15 (SAYGHI) and 78–80 (TRF). Tyrosine 12 serves as a coordination point for NAD(+). Tryptophan 98 is a binding site for substrate. Residues 113–119 (STATQHG) and histidine 134 contribute to the FMN site.

Belongs to the WrbA family. FMN is required as a cofactor.

The catalysed reaction is a quinone + NADH + H(+) = a quinol + NAD(+). The enzyme catalyses a quinone + NADPH + H(+) = a quinol + NADP(+). The protein is NAD(P)H dehydrogenase (quinone) of Xanthobacter autotrophicus (strain ATCC BAA-1158 / Py2).